The sequence spans 240 residues: Ribose-5-phosphate isomerase (240 aa).

Residues 34–37 (SGST), 88–91 (DGAD), and 101–104 (KGGG) each bind substrate. Glu-110 acts as the Proton acceptor in catalysis. A substrate-binding site is contributed by Lys-128.

Belongs to the ribose 5-phosphate isomerase family.

The protein resides in the cytoplasm. The catalysed reaction is aldehydo-D-ribose 5-phosphate = D-ribulose 5-phosphate. It participates in carbohydrate degradation; pentose phosphate pathway; D-ribose 5-phosphate from D-ribulose 5-phosphate (non-oxidative stage): step 1/1. In terms of biological role, involved in the first step of the non-oxidative branch of the pentose phosphate pathway. It catalyzes the reversible conversion of ribose-5-phosphate to ribulose 5-phosphate. In Candida albicans (strain SC5314 / ATCC MYA-2876) (Yeast), this protein is Ribose-5-phosphate isomerase (RKI1).